The sequence spans 687 residues: Chloride channel protein ClC-Kb (687 aa).

Residues 1–50 (MEELVGLREGASKKPVPLQELWGPCPRIRRNIQGGLEWLKERLFRVGEDW) are Cytoplasmic-facing. Helical transmembrane passes span 51-82 (YFLVALGVLMALISYAMNFTIGRVVRAHKWLY) and 91-111 (LRYLSWTVYPVALLSFSSGFS). The segment at residues 116–127 (PSSGGSGIPEVK) is an intramembrane region (helical). Ser121 contributes to the chloride binding site. 2 consecutive transmembrane segments (helical) span residues 141–160 (IKNFGAKVVGLSCTLATGST) and 161–180 (IFLGKLGPFVHLSVMIAAYL). The segment at residues 203–224 (AGAAVGVATVFAAPISGVLFSI) is an intramembrane region (helical). A helical transmembrane segment spans residues 236-255 (YWRGFFAATCGAFMFHLLAV). The Ca(2+) site is built by Glu259, Glu261, Asp278, and Glu281. 2 helical membrane passes run 282–310 (IFFFVALGAICGILSCGYNYSQRTFLFFL) and 325–342 (PLYSALAAVVLASITYPP). Residues 349 to 360 (ASRLSMSEHLET) constitute an intramembrane region (helical). 2 consecutive transmembrane segments (helical) span residues 400 to 420 (GTLVFFLVMKFWMLILATTIP) and 421 to 440 (IPAGYFLPIFIYGAVIGRLF). Chloride is bound at residue Phe426. The segment at residues 464–496 (GAYALAGAAAFSGAVTHTLSTALLAFEVTGQLV) is an intramembrane region (helical). Residues 500-520 (PVLMAVLAANAISQSFQPSFY) traverse the membrane as a helical segment. The Cytoplasmic portion of the chain corresponds to 521 to 687 (DGTIIVKKLP…STLTNPPAPK (167 aa)). CBS domains follow at residues 551–609 (MNCA…EPAS) and 626–687 (CPTQ…PAPK).

The protein belongs to the chloride channel (TC 2.A.49) family. CLCNKB subfamily. Homodimer. Interacts with BSND. In terms of processing, N-glycosylated. As to expression, specifically expressed in the kidney, predominantly in the outer medulla and cortex. All nephron segments expressing BSND also express CLCNK proteins.

The protein localises to the basolateral cell membrane. It carries out the reaction chloride(in) = chloride(out). The enzyme catalyses iodide(out) = iodide(in). It catalyses the reaction nitrate(in) = nitrate(out). The catalysed reaction is bromide(in) = bromide(out). Its function is as follows. Anion-selective channel permeable to small monovalent anions with ion selectivity for chloride &gt; bromide &gt; nitrate &gt; iodide. Forms a homodimeric channel where each subunit has its own ion conduction pathway. May conduct double-barreled currents controlled by two types of gates, two fast gates that control each subunit independently and a slow common gate that opens and shuts off both subunits simultaneously. Assembles with the regulatory subunit BSND/Barttin for sorting at the basolateral plasma membrane domain and functional switch to the ion conducting state. CLCNKB:BSND channels display mostly a linear current-voltage relationship controlled by common gate. Mediates chloride conductance along nephron segments, namely the thick ascending limb of Henle's loop, convoluted tubule and the collecting duct, contributing to the maintenance of systemic acid-base and electrolyte homeostasis. Conducts chloride currents in the stria vascularis of the inner ear to establish the endocochlear potential necessary for normal hearing. This Mus musculus (Mouse) protein is Chloride channel protein ClC-Kb.